The following is a 437-amino-acid chain: Ribosomal protein uS12 methylthiotransferase RimO (437 aa).

One can recognise an MTTase N-terminal domain in the interval 9–125 (PAIFLLSLGC…VLAAIGAHYC (117 aa)). [4Fe-4S] cluster is bound by residues cysteine 18, cysteine 54, cysteine 88, cysteine 149, cysteine 153, and cysteine 156. The region spanning 135-364 (LTPPHYAFLK…MELQESIAAS (230 aa)) is the Radical SAM core domain. The 68-residue stretch at 367-434 (RKLEGQTLTV…AYELFGRVGS (68 aa)) folds into the TRAM domain.

This sequence belongs to the methylthiotransferase family. RimO subfamily. It depends on [4Fe-4S] cluster as a cofactor.

It localises to the cytoplasm. It carries out the reaction L-aspartate(89)-[ribosomal protein uS12]-hydrogen + (sulfur carrier)-SH + AH2 + 2 S-adenosyl-L-methionine = 3-methylsulfanyl-L-aspartate(89)-[ribosomal protein uS12]-hydrogen + (sulfur carrier)-H + 5'-deoxyadenosine + L-methionine + A + S-adenosyl-L-homocysteine + 2 H(+). Catalyzes the methylthiolation of an aspartic acid residue of ribosomal protein uS12. This chain is Ribosomal protein uS12 methylthiotransferase RimO, found in Chlorobaculum parvum (strain DSM 263 / NCIMB 8327) (Chlorobium vibrioforme subsp. thiosulfatophilum).